The following is a 123-amino-acid chain: Holo-[acyl-carrier-protein] synthase (123 aa).

Aspartate 8 and glutamate 60 together coordinate Mg(2+).

It belongs to the P-Pant transferase superfamily. AcpS family. Mg(2+) serves as cofactor.

It localises to the cytoplasm. The enzyme catalyses apo-[ACP] + CoA = holo-[ACP] + adenosine 3',5'-bisphosphate + H(+). Transfers the 4'-phosphopantetheine moiety from coenzyme A to a Ser of acyl-carrier-protein. The chain is Holo-[acyl-carrier-protein] synthase from Ehrlichia chaffeensis (strain ATCC CRL-10679 / Arkansas).